A 199-amino-acid chain; its full sequence is NADH-quinone oxidoreductase subunit C (199 aa).

It belongs to the complex I 30 kDa subunit family. In terms of assembly, NDH-1 is composed of 14 different subunits. Subunits NuoB, C, D, E, F, and G constitute the peripheral sector of the complex.

The protein localises to the cell inner membrane. The enzyme catalyses a quinone + NADH + 5 H(+)(in) = a quinol + NAD(+) + 4 H(+)(out). Its function is as follows. NDH-1 shuttles electrons from NADH, via FMN and iron-sulfur (Fe-S) centers, to quinones in the respiratory chain. The immediate electron acceptor for the enzyme in this species is believed to be ubiquinone. Couples the redox reaction to proton translocation (for every two electrons transferred, four hydrogen ions are translocated across the cytoplasmic membrane), and thus conserves the redox energy in a proton gradient. The protein is NADH-quinone oxidoreductase subunit C of Paramagnetospirillum magneticum (strain ATCC 700264 / AMB-1) (Magnetospirillum magneticum).